The following is a 356-amino-acid chain: cGAMP-activated phospholipase (356 aa).

A PNPLA domain is found at 15-206; sequence LSLNGGGARG…VANNPSYIGL (192 aa). The short motif at 19-24 is the GXGXXG element; that stretch reads GGGARG. The GXSXG signature appears at 58–62; it reads GTSIG. Ser-60 functions as the Nucleophile in the catalytic mechanism. Residue Asp-193 is the Proton acceptor of the active site. The DGA/G signature appears at 193 to 195; the sequence is DGG.

It belongs to the patatin family.

The catalysed reaction is a 1,2-diacyl-sn-glycero-3-phosphocholine + H2O = a 2-acyl-sn-glycero-3-phosphocholine + a fatty acid + H(+). It carries out the reaction 1,2-di-(9Z-octadecenoyl)-sn-glycero-3-phosphoethanolamine + 2 H2O = sn-glycero-3-phosphoethanolamine + 2 (9Z)-octadecenoate + 2 H(+). With respect to regulation, phospholipase activity is specifically activated upon 3',3'-cGAMP binding, which is produced by the cognate cyclic nucleotide synthase encoded in the same operon. In terms of biological role, effector phospholipase of a CBASS antiviral system. CBASS (cyclic oligonucleotide-based antiphage signaling system) provides immunity against bacteriophages. The CD-NTase protein (DncV) synthesizes cyclic nucleotides in response to infection; these serve as specific second messenger signals. The signals activate a diverse range of effectors, leading to bacterial cell death and thus abortive phage infection. A type II-A(GA) CBASS system. Phospholipase that is activated upon binding to the cyclic dinucleotide (CDN) second messenger 3',3'-cyclic GMP-AMP (cGAMP). Degrades phospholipids in the cell membrane. Functionally, protects E.coli against phage infection. When capV and dncV are introduced in E.coli MG1655 there is 1000-fold protection against phage P1; protection against other phage (T2, T4, T5, T6 and lambda-vir) requires the 2 subsequent genes (cap2 and cap3). Upon P1 phage infection the activating molecule is produced between 30 and 40 minutes. Activation leads to bacterial cell lysis and death, which occurs before the phage has finished its replication cycle, thus protecting non-infected bacteria by aborting the phage infection and preventing its propagation. In another paper the capV-dncV-cap2-cap3 operon gives 10(4)-10(5)-fold protection against phages lambda, T2, T4 and T6, about 1000-fold protection against P1 and 10-fold protection against T5. The chain is cGAMP-activated phospholipase from Escherichia coli (strain TW11681).